The sequence spans 488 residues: Protein Notchless (488 aa).

A disordered region spans residues 1-22 (MLAKKQKMQETDTEQEATPHTI). Residues 19–101 (PHTIQARLVS…VIDIVYQPQA (83 aa)) form a ubiquitin-like (UBL) domain region. WD repeat units follow at residues 117 to 156 (GHAE…PHFT), 159 to 198 (GHKQ…QKGR), 202 to 246 (GHKK…CLMN), 249 to 287 (GHTN…LCRT), 329 to 370 (LQES…CVER), 373 to 412 (GHQN…YMAT), 415 to 454 (GHVQ…LAQE), and 457 to 488 (GHAD…LWAY).

The protein belongs to the NLE1/RSA4 family. As to quaternary structure, interacts with Notch (via cytoplasmic domain). Associates with the pre-60S ribosomal particle.

Its subcellular location is the nucleus. The protein localises to the nucleolus. Plays a role in regulating Notch activity. This chain is Protein Notchless, found in Drosophila melanogaster (Fruit fly).